The chain runs to 492 residues: Probable malate:quinone oxidoreductase 1 (492 aa).

It belongs to the MQO family. Requires FAD as cofactor.

The enzyme catalyses (S)-malate + a quinone = a quinol + oxaloacetate. The protein operates within carbohydrate metabolism; tricarboxylic acid cycle; oxaloacetate from (S)-malate (quinone route): step 1/1. This is Probable malate:quinone oxidoreductase 1 from Staphylococcus aureus (strain MRSA252).